We begin with the raw amino-acid sequence, 181 residues long: Large ribosomal subunit protein uL10 (181 aa).

It belongs to the universal ribosomal protein uL10 family. In terms of assembly, part of the ribosomal stalk of the 50S ribosomal subunit. The N-terminus interacts with L11 and the large rRNA to form the base of the stalk. The C-terminus forms an elongated spine to which L12 dimers bind in a sequential fashion forming a multimeric L10(L12)X complex.

Forms part of the ribosomal stalk, playing a central role in the interaction of the ribosome with GTP-bound translation factors. This is Large ribosomal subunit protein uL10 from Trichormus variabilis (strain ATCC 29413 / PCC 7937) (Anabaena variabilis).